A 475-amino-acid chain; its full sequence is MAMLGKRRPPRTANERVRRERGSATRRDDATADGLSIERLAHDGRGVARDPHGKTVFVDQALPGERVRVAVHRQRKRFDEAHVVERLATSPERATPPCAYYGRCGGCDLQHLDLEAQREHKRRTLDELFTRQGLTLPEIEVLAGEGLAYRRRARLGVKCDAEGTPHLGFRARGSEHLIDIDSCVVLEPVLSRLIAPLRACLVQLEAPRRVGHIELIATAEGACVVVRQLREVPGDEARWRRFAAEHDVTLAWRVGREAPTLRWLHAPRGEALHVTLVLDDTTLSLGCVPGDFLQINADVNARLVRTALAWLAPRGEERVLDLFAGVGNFTLALAPRVASITGIEGSPAMVERLADNARRAGLHQVGAQQSDLATQVPEVAAVDWVIMDPPRGGAEALCRALADSPVTTLLYVSCDPAALARDAARLVQGGYRIQRAALADMFPHTAHLESMLLLTRDTPRGRSTSVEREDHGQGP.

Basic residues predominate over residues 1–10 (MAMLGKRRPP). A disordered region spans residues 1–33 (MAMLGKRRPPRTANERVRRERGSATRRDDATAD). Residues 13–30 (ANERVRRERGSATRRDDA) are compositionally biased toward basic and acidic residues. The TRAM domain maps to 26 to 85 (RRDDATADGLSIERLAHDGRGVARDPHGKTVFVDQALPGERVRVAVHRQRKRFDEAHVVE). Residues cysteine 98, cysteine 104, cysteine 107, and cysteine 183 each coordinate [4Fe-4S] cluster. S-adenosyl-L-methionine is bound by residues glutamine 294, phenylalanine 323, asparagine 328, glutamate 344, aspartate 371, and aspartate 388. Cysteine 414 (nucleophile) is an active-site residue. The segment at 455–475 (TRDTPRGRSTSVEREDHGQGP) is disordered. Positions 457 to 475 (DTPRGRSTSVEREDHGQGP) are enriched in basic and acidic residues.

It belongs to the class I-like SAM-binding methyltransferase superfamily. RNA M5U methyltransferase family. RlmD subfamily.

It catalyses the reaction uridine(1939) in 23S rRNA + S-adenosyl-L-methionine = 5-methyluridine(1939) in 23S rRNA + S-adenosyl-L-homocysteine + H(+). In terms of biological role, catalyzes the formation of 5-methyl-uridine at position 1939 (m5U1939) in 23S rRNA. This chain is 23S rRNA (uracil(1939)-C(5))-methyltransferase RlmD, found in Chromohalobacter salexigens (strain ATCC BAA-138 / DSM 3043 / CIP 106854 / NCIMB 13768 / 1H11).